The chain runs to 143 residues: SsrA-binding protein (143 aa).

This sequence belongs to the SmpB family.

It localises to the cytoplasm. Functionally, required for rescue of stalled ribosomes mediated by trans-translation. Binds to transfer-messenger RNA (tmRNA), required for stable association of tmRNA with ribosomes. tmRNA and SmpB together mimic tRNA shape, replacing the anticodon stem-loop with SmpB. tmRNA is encoded by the ssrA gene; the 2 termini fold to resemble tRNA(Ala) and it encodes a 'tag peptide', a short internal open reading frame. During trans-translation Ala-aminoacylated tmRNA acts like a tRNA, entering the A-site of stalled ribosomes, displacing the stalled mRNA. The ribosome then switches to translate the ORF on the tmRNA; the nascent peptide is terminated with the 'tag peptide' encoded by the tmRNA and targeted for degradation. The ribosome is freed to recommence translation, which seems to be the essential function of trans-translation. The protein is SsrA-binding protein of Mycoplasmoides gallisepticum (strain R(low / passage 15 / clone 2)) (Mycoplasma gallisepticum).